Reading from the N-terminus, the 245-residue chain is 1-(5-phosphoribosyl)-5-[(5-phosphoribosylamino)methylideneamino] imidazole-4-carboxamide isomerase (245 aa).

The active-site Proton acceptor is the Asp-8. Asp-129 functions as the Proton donor in the catalytic mechanism.

This sequence belongs to the HisA/HisF family.

The protein localises to the cytoplasm. The enzyme catalyses 1-(5-phospho-beta-D-ribosyl)-5-[(5-phospho-beta-D-ribosylamino)methylideneamino]imidazole-4-carboxamide = 5-[(5-phospho-1-deoxy-D-ribulos-1-ylimino)methylamino]-1-(5-phospho-beta-D-ribosyl)imidazole-4-carboxamide. The protein operates within amino-acid biosynthesis; L-histidine biosynthesis; L-histidine from 5-phospho-alpha-D-ribose 1-diphosphate: step 4/9. In Trichlorobacter lovleyi (strain ATCC BAA-1151 / DSM 17278 / SZ) (Geobacter lovleyi), this protein is 1-(5-phosphoribosyl)-5-[(5-phosphoribosylamino)methylideneamino] imidazole-4-carboxamide isomerase.